The sequence spans 527 residues: Putative ABC transporter peptide-binding protein BOV_A0352 (527 aa).

The signal sequence occupies residues 1 to 23; it reads MRLRNFYSALALSAAVFAGPLYA.

This sequence belongs to the bacterial solute-binding protein 5 family. The complex is composed of two ATP-binding proteins (BOV_A0347 and BOV_A0348), two transmembrane proteins (BOV_A0350 and BOV_A0351) and a solute-binding protein (BOV_A0352).

The protein localises to the periplasm. Probably part of an ABC transporter complex that could be involved in peptide import. In Brucella ovis (strain ATCC 25840 / 63/290 / NCTC 10512), this protein is Putative ABC transporter peptide-binding protein BOV_A0352.